We begin with the raw amino-acid sequence, 270 residues long: Aliphatic sulfonates import ATP-binding protein SsuB 2 (270 aa).

Residues 17 to 241 enclose the ABC transporter domain; that stretch reads LLDLRIARKL…PRDRRDPSLA (225 aa). 50 to 57 contributes to the ATP binding site; that stretch reads GPSGCGKS.

This sequence belongs to the ABC transporter superfamily. Aliphatic sulfonates importer (TC 3.A.1.17.2) family. As to quaternary structure, the complex is composed of two ATP-binding proteins (SsuB), two transmembrane proteins (SsuC) and a solute-binding protein (SsuA).

The protein localises to the cell inner membrane. The enzyme catalyses ATP + H2O + aliphatic sulfonate-[sulfonate-binding protein]Side 1 = ADP + phosphate + aliphatic sulfonateSide 2 + [sulfonate-binding protein]Side 1.. In terms of biological role, part of the ABC transporter complex SsuABC involved in aliphatic sulfonates import. Responsible for energy coupling to the transport system. The sequence is that of Aliphatic sulfonates import ATP-binding protein SsuB 2 from Burkholderia cenocepacia (strain HI2424).